The sequence spans 415 residues: Putative F-box/FBD/LRR-repeat protein At3g49040 (415 aa).

The F-box domain occupies 10–58; that stretch reads EDRISELHEALLVHIMSSLPTKTVVATSVLSKRWRHVWKTVQNLKFVSK. LRR repeat units follow at residues 60–86, 87–114, 143–170, 171–196, and 213–241; these read HQTF…DLEF, SNQL…VLDL, TLTL…HLYK, VHFY…IVHR, and RLTI…NIRR. The region spanning 272–377 is the FBD domain; that stretch reads ILESLTSAKR…TSLKKATFST (106 aa).

This is Putative F-box/FBD/LRR-repeat protein At3g49040 from Arabidopsis thaliana (Mouse-ear cress).